Reading from the N-terminus, the 375-residue chain is Histidine biosynthesis bifunctional protein HisB (375 aa).

Positions 1–168 (MTPILFVDRD…GIAHELADAP (168 aa)) are histidinol-phosphatase. Residue Asp8 is the Nucleophile of the active site. Mg(2+) contacts are provided by Asp8, Asp10, and Asp128. The active-site Proton donor is Asp10. Positions 169-375 (RRAVVQRNTK…TALPTTKGAL (207 aa)) are imidazoleglycerol-phosphate dehydratase.

In the N-terminal section; belongs to the histidinol-phosphatase family. This sequence in the C-terminal section; belongs to the imidazoleglycerol-phosphate dehydratase family. Requires Mg(2+) as cofactor.

The protein localises to the cytoplasm. It carries out the reaction D-erythro-1-(imidazol-4-yl)glycerol 3-phosphate = 3-(imidazol-4-yl)-2-oxopropyl phosphate + H2O. It catalyses the reaction L-histidinol phosphate + H2O = L-histidinol + phosphate. It functions in the pathway amino-acid biosynthesis; L-histidine biosynthesis; L-histidine from 5-phospho-alpha-D-ribose 1-diphosphate: step 6/9. The protein operates within amino-acid biosynthesis; L-histidine biosynthesis; L-histidine from 5-phospho-alpha-D-ribose 1-diphosphate: step 8/9. In Xanthomonas euvesicatoria pv. vesicatoria (strain 85-10) (Xanthomonas campestris pv. vesicatoria), this protein is Histidine biosynthesis bifunctional protein HisB.